Here is a 239-residue protein sequence, read N- to C-terminus: Lectin (239 aa).

N-linked (GlcNAc...) asparagine glycans are attached at residues N17 and N113.

The protein belongs to the leguminous lectin family. As to quaternary structure, homodimer.

In terms of biological role, galactose and N-acetyllactosamine specific lectin. This chain is Lectin, found in Erythrina crista-galli (Cockspur coral tree).